The primary structure comprises 319 residues: Acetyl esterase (319 aa).

Positions 91 to 93 (HGG) match the Involved in the stabilization of the negatively charged intermediate by the formation of the oxyanion hole motif. Active-site residues include Ser-165, Asp-262, and His-292.

It belongs to the 'GDXG' lipolytic enzyme family. Homodimer. Interacts with MalT and MelA.

It is found in the cytoplasm. Functionally, displays esterase activity towards short chain fatty esters (acyl chain length of up to 8 carbons). Able to hydrolyze triacetylglycerol (triacetin) and tributyrylglycerol (tributyrin), but not trioleylglycerol (triolein) or cholesterol oleate. Negatively regulates MalT activity by antagonizing maltotriose binding. Inhibits MelA galactosidase activity. This chain is Acetyl esterase, found in Shigella boydii serotype 18 (strain CDC 3083-94 / BS512).